Consider the following 31-residue polypeptide: DLFQFGKMIECANKGSRPSLDYMNYGCYCGK.

The protein belongs to the phospholipase A2 family. Group I subfamily. As to quaternary structure, heterotrimer of alpha, beta and gamma chains, each related to PLA2. As to expression, expressed by the venom gland.

Its subcellular location is the secreted. Its function is as follows. Heterotrimer: Snake venom phospholipase A2 (PLA2) that has presynaptic neurotoxicity. Inhibits nerve-evoked twitch contractions but not responses to cholinergic agonists acetylcholine and carbachol and to depolarizing agonist KCl. Causes a fade in tetanic contractions. Displays a triphasic mode of action with depression, enhancement and blockade of neurotransmission. Does not display myotoxic activity such as changes in baseline muscle tension or inhibition of directly stimulated muscle twitches. All subunits are necessary for maximum toxicity. Functionally, monomer: The beta chain has no enzymatic activity and is not toxic by itself. The polypeptide is Phospholipase A2 homolog P-elapitoxin-Aa1a beta chain (Acanthophis antarcticus (Common death adder)).